A 525-amino-acid chain; its full sequence is GMP synthase [glutamine-hydrolyzing] (525 aa).

Residues 16–205 form the Glutamine amidotransferase type-1 domain; that stretch reads PVLVVDFGAQ…LHDFAGLGAQ (190 aa). The active-site Nucleophile is the cysteine 93. Residues histidine 179 and glutamate 181 contribute to the active site. The 194-residue stretch at 206–399 folds into the GMPS ATP-PPase domain; sequence WTPANIANAL…LGLPEEIVAR (194 aa). Residue 233–239 coordinates ATP; sequence SGGVDSA.

Homodimer.

The catalysed reaction is XMP + L-glutamine + ATP + H2O = GMP + L-glutamate + AMP + diphosphate + 2 H(+). It participates in purine metabolism; GMP biosynthesis; GMP from XMP (L-Gln route): step 1/1. Its function is as follows. Catalyzes the synthesis of GMP from XMP. The chain is GMP synthase [glutamine-hydrolyzing] from Mycobacterium bovis (strain BCG / Pasteur 1173P2).